The following is a 152-amino-acid chain: 1,4-dihydroxy-2-naphthoyl-CoA hydrolase (152 aa).

Residue aspartate 20 is part of the active site.

It belongs to the 4-hydroxybenzoyl-CoA thioesterase family. DHNA-CoA hydrolase subfamily.

The enzyme catalyses 1,4-dihydroxy-2-naphthoyl-CoA + H2O = 1,4-dihydroxy-2-naphthoate + CoA + H(+). It functions in the pathway cofactor biosynthesis; phylloquinone biosynthesis. The protein operates within quinol/quinone metabolism; 1,4-dihydroxy-2-naphthoate biosynthesis; 1,4-dihydroxy-2-naphthoate from chorismate: step 7/7. Catalyzes the hydrolysis of 1,4-dihydroxy-2-naphthoyl-CoA (DHNA-CoA) to 1,4-dihydroxy-2-naphthoate (DHNA), a reaction involved in phylloquinone (vitamin K1) biosynthesis. The polypeptide is 1,4-dihydroxy-2-naphthoyl-CoA hydrolase (Synechococcus sp. (strain CC9311)).